We begin with the raw amino-acid sequence, 40 residues long: Conotoxin Bt14.16 (40 aa).

A propeptide spanning residues 1–18 is cleaved from the precursor; that stretch reads SDGRDAAVIYTESDVIAR. 2 disulfides stabilise this stretch: C21-C36 and C24-C29.

Belongs to the conotoxin A superfamily. Expressed by the venom duct.

The protein resides in the secreted. Probable neurotoxin with unknown target. Possibly targets ion channels. The chain is Conotoxin Bt14.16 from Conus betulinus (Beech cone).